The following is a 126-amino-acid chain: Fluoride-specific ion channel FluC (126 aa).

4 consecutive transmembrane segments (helical) span residues 3–23 (LSIL…WFLG), 35–55 (LGTL…VAYF), 68–88 (FIIT…AEVV), and 103–123 (IAIH…TVAV). Na(+)-binding residues include glycine 75 and serine 78.

This sequence belongs to the fluoride channel Fluc/FEX (TC 1.A.43) family.

It localises to the cell inner membrane. It carries out the reaction fluoride(in) = fluoride(out). With respect to regulation, na(+) is not transported, but it plays an essential structural role and its presence is essential for fluoride channel function. In terms of biological role, fluoride-specific ion channel. Important for reducing fluoride concentration in the cell, thus reducing its toxicity. The polypeptide is Fluoride-specific ion channel FluC (Paraburkholderia phymatum (strain DSM 17167 / CIP 108236 / LMG 21445 / STM815) (Burkholderia phymatum)).